The sequence spans 83 residues: Large ribosomal subunit protein bL27 (83 aa).

The protein belongs to the bacterial ribosomal protein bL27 family.

The sequence is that of Large ribosomal subunit protein bL27 from Treponema denticola (strain ATCC 35405 / DSM 14222 / CIP 103919 / JCM 8153 / KCTC 15104).